The chain runs to 272 residues: Ethanolamine ammonia-lyase small subunit (272 aa).

Adenosylcob(III)alamin is bound by residues Val-161, Glu-182, and Cys-211.

The protein belongs to the EutC family. The basic unit is a heterodimer which dimerizes to form tetramers. The heterotetramers trimerize; 6 large subunits form a core ring with 6 small subunits projecting outwards. Adenosylcob(III)alamin serves as cofactor.

The protein localises to the bacterial microcompartment. The enzyme catalyses ethanolamine = acetaldehyde + NH4(+). It participates in amine and polyamine degradation; ethanolamine degradation. In terms of biological role, catalyzes the deamination of various vicinal amino-alcohols to oxo compounds. Allows this organism to utilize ethanolamine as the sole source of nitrogen and carbon in the presence of external vitamin B12. The sequence is that of Ethanolamine ammonia-lyase small subunit from Pseudomonas putida (strain ATCC 700007 / DSM 6899 / JCM 31910 / BCRC 17059 / LMG 24140 / F1).